A 96-amino-acid chain; its full sequence is Small ribosomal subunit protein bS6 (96 aa).

Belongs to the bacterial ribosomal protein bS6 family.

Binds together with bS18 to 16S ribosomal RNA. This chain is Small ribosomal subunit protein bS6, found in Streptococcus pneumoniae serotype 19F (strain G54).